Reading from the N-terminus, the 274-residue chain is Beta-lactamase OXA-9 (274 aa).

A signal peptide spans 1-24; that stretch reads MKKILLLHMLVFVSATLPISSVAS. Serine 58 (acyl-ester intermediate) is an active-site residue. Residue lysine 61 is modified to N6-carboxylysine. Position 206–208 (206–208) interacts with substrate; sequence KSG.

The protein belongs to the class-D beta-lactamase family.

It catalyses the reaction a beta-lactam + H2O = a substituted beta-amino acid. Functionally, oxacillin-hydrolyzing beta-lactamase. Confers resistance to beta-lactam antibiotics but at a significantly lower level than the TEM bla gene product. This Klebsiella aerogenes (Enterobacter aerogenes) protein is Beta-lactamase OXA-9 (bla).